The chain runs to 83 residues: U-actitoxin-Aeq6b (83 aa).

The first 20 residues, 1 to 20 (MIYKAVFVCLVLVLLGDVFC), serve as a signal peptide directing secretion. The propeptide occupies 21-36 (SPRNSGGGTLNDNPFE). Pro82 is subject to Proline amide.

In terms of processing, contains 3 disulfide bonds. Expressed by acrorhagi.

It is found in the secreted. The protein localises to the nematocyst. In terms of biological role, toxin. The protein is U-actitoxin-Aeq6b of Actinia equina (Beadlet anemone).